A 147-amino-acid polypeptide reads, in one-letter code: 2-amino-4-hydroxy-6-hydroxymethyldihydropteridine pyrophosphokinase (147 aa).

The protein belongs to the HPPK family.

It carries out the reaction 6-hydroxymethyl-7,8-dihydropterin + ATP = (7,8-dihydropterin-6-yl)methyl diphosphate + AMP + H(+). It functions in the pathway cofactor biosynthesis; tetrahydrofolate biosynthesis; 2-amino-4-hydroxy-6-hydroxymethyl-7,8-dihydropteridine diphosphate from 7,8-dihydroneopterin triphosphate: step 4/4. Catalyzes the transfer of pyrophosphate from adenosine triphosphate (ATP) to 6-hydroxymethyl-7,8-dihydropterin, an enzymatic step in folate biosynthesis pathway. The protein is 2-amino-4-hydroxy-6-hydroxymethyldihydropteridine pyrophosphokinase (folK) of Porphyromonas gingivalis (strain ATCC 33277 / DSM 20709 / CIP 103683 / JCM 12257 / NCTC 11834 / 2561).